Here is a 1004-residue protein sequence, read N- to C-terminus: Bifunctional glutamine synthetase adenylyltransferase/adenylyl-removing enzyme (1004 aa).

The tract at residues 1-496 is adenylyl removase; that stretch reads MVRPPSARSA…LHAKLFYRPL (496 aa). The interval 502 to 1004 is adenylyl transferase; it reads RMDPDALRLS…RAVVERVFGS (503 aa).

It belongs to the GlnE family. Mg(2+) serves as cofactor.

The catalysed reaction is [glutamine synthetase]-O(4)-(5'-adenylyl)-L-tyrosine + phosphate = [glutamine synthetase]-L-tyrosine + ADP. The enzyme catalyses [glutamine synthetase]-L-tyrosine + ATP = [glutamine synthetase]-O(4)-(5'-adenylyl)-L-tyrosine + diphosphate. Its function is as follows. Involved in the regulation of glutamine synthetase GlnA, a key enzyme in the process to assimilate ammonia. When cellular nitrogen levels are high, the C-terminal adenylyl transferase (AT) inactivates GlnA by covalent transfer of an adenylyl group from ATP to specific tyrosine residue of GlnA, thus reducing its activity. Conversely, when nitrogen levels are low, the N-terminal adenylyl removase (AR) activates GlnA by removing the adenylyl group by phosphorolysis, increasing its activity. The regulatory region of GlnE binds the signal transduction protein PII (GlnB) which indicates the nitrogen status of the cell. This is Bifunctional glutamine synthetase adenylyltransferase/adenylyl-removing enzyme from Nocardia farcinica (strain IFM 10152).